The following is a 426-amino-acid chain: D-tagatose-1,6-bisphosphate aldolase subunit KbaZ (426 aa).

This sequence belongs to the GatZ/KbaZ family. KbaZ subfamily. Forms a complex with KbaY.

It functions in the pathway carbohydrate metabolism; D-tagatose 6-phosphate degradation; D-glyceraldehyde 3-phosphate and glycerone phosphate from D-tagatose 6-phosphate: step 2/2. Functionally, component of the tagatose-1,6-bisphosphate aldolase KbaYZ that is required for full activity and stability of the Y subunit. Could have a chaperone-like function for the proper and stable folding of KbaY. When expressed alone, KbaZ does not show any aldolase activity. The protein is D-tagatose-1,6-bisphosphate aldolase subunit KbaZ of Escherichia coli O6:K15:H31 (strain 536 / UPEC).